The chain runs to 579 residues: UPF0324 membrane protein DVU_0943 (579 aa).

The next 10 membrane-spanning stretches (helical) occupy residues 26 to 45 (YWAIWLGFVILIAGMWLFLA), 193 to 215 (AFNISTSLPMLMVVMGLFFAIGM), 225 to 243 (FLVGFIGVFVVAVIAQMMG), 250 to 272 (YWGIGTEAWAIIIGMLIANTVGT), 305 to 327 (IGIPGIFVAWVVTPIVLICTFIF), 369 to 391 (LTLSIGLSLVFTAIMMIVMPAFI), 430 to 452 (AATIKMIQNVLIGVVAFGVAVYW), 473 to 495 (FPKFVLGFLTASIIFSIISGSLG), 515 to 533 (LRGWFFCLAFTAIGLATNF), and 546 to 568 (LILYVCGQSFNLVLTLTMAYIMF).

This sequence belongs to the UPF0324 family.

It is found in the cell membrane. The protein is UPF0324 membrane protein DVU_0943 of Nitratidesulfovibrio vulgaris (strain ATCC 29579 / DSM 644 / CCUG 34227 / NCIMB 8303 / VKM B-1760 / Hildenborough) (Desulfovibrio vulgaris).